The chain runs to 130 residues: MKKTYLLNSEISEVVARLGHTDLLVIADSGLPIPDGVKRIDIALTKGIPSFKDTLNTVLTELGVEKAYIAKEMIDKNNDLYLYLLELFGEKLIIISHEDLKAMSKNARAIIRTGEYKPYANIILESGVEF.

Histidine 20 functions as the Proton donor in the catalytic mechanism. Substrate-binding positions include aspartate 28, histidine 97, and 119 to 121; that span reads YAN.

It belongs to the RbsD / FucU family. RbsD subfamily. Homodecamer.

The protein localises to the cytoplasm. It carries out the reaction beta-D-ribopyranose = beta-D-ribofuranose. Its pathway is carbohydrate metabolism; D-ribose degradation; D-ribose 5-phosphate from beta-D-ribopyranose: step 1/2. Its function is as follows. Catalyzes the interconversion of beta-pyran and beta-furan forms of D-ribose. The sequence is that of D-ribose pyranase from Thermoanaerobacter pseudethanolicus (strain ATCC 33223 / 39E) (Clostridium thermohydrosulfuricum).